A 346-amino-acid polypeptide reads, in one-letter code: Histone PARylation factor 1 (346 aa).

N-acetylmethionine is present on M1. 3 positions are modified to N6-acetyllysine: K19, K186, and K233. D235 carries the polyADP-ribosyl aspartic acid modification. An ADP-ribosyltyrosine modification is found at Y238. Residue E240 is modified to PolyADP-ribosyl glutamic acid. Residues P242 to G346 are interaction with PARP1. E284 (proton donor) is an active-site residue.

It belongs to the HPF1 family. Interacts with PARP1 (via the PARP catalytic domain). Interacts with PARP2 (via the PARP catalytic domain). Interacts with core nucleosomes in a PARP1- and PARP2-dependent manner.

Its subcellular location is the chromosome. It is found in the nucleus. In terms of biological role, cofactor for serine ADP-ribosylation that confers serine specificity on PARP1 and PARP2 and plays a key role in DNA damage response. Initiates the repair of double-strand DNA breaks: recruited to DNA damage sites by PARP1 and PARP2 and switches the amino acid specificity of PARP1 and PARP2 from aspartate or glutamate to serine residues, licensing serine ADP-ribosylation of target proteins. Serine ADP-ribosylation of target proteins, such as histones, promotes decompaction of chromatin and the recruitment of repair factors leading to the reparation of DNA strand breaks. Serine ADP-ribosylation of proteins constitutes the primary form of ADP-ribosylation of proteins in response to DNA damage. HPF1 acts by completing the active site of PARP1 and PARP2: forms a composite active site composed of residues from HPF1 and PARP1 or PARP2. While HPF1 promotes the initiation of serine ADP-ribosylation, it restricts the polymerase activity of PARP1 and PARP2 in order to limit the length of poly-ADP-ribose chains. HPF1 also promotes tyrosine ADP-ribosylation, probably by conferring tyrosine specificity on PARP1. The polypeptide is Histone PARylation factor 1 (Mus musculus (Mouse)).